Consider the following 168-residue polypeptide: Photosystem I assembly protein Ycf3 (168 aa).

TPR repeat units lie at residues 35–68 (AFTYYRDGMSAQSEGNYAEALQNYYEATRPEIDP), 72–105 (SYILYNIGLIHTSNGEHTKALEYYFRALERNPFL), and 120–153 (GEQAIRQGDSEIAEAWSDQAAEYWKQAIALTPGN).

It belongs to the Ycf3 family.

It localises to the plastid. Its subcellular location is the chloroplast thylakoid membrane. In terms of biological role, essential for the assembly of the photosystem I (PSI) complex. May act as a chaperone-like factor to guide the assembly of the PSI subunits. This Acorus calamus var. americanus (American sweet flag) protein is Photosystem I assembly protein Ycf3.